The sequence spans 428 residues: Serine--tRNA ligase (428 aa).

234-236 (TAE) contacts L-serine. 265–267 (RRE) lines the ATP pocket. Position 288 (E288) interacts with L-serine. Residue 352-355 (EISS) coordinates ATP. Residue S388 coordinates L-serine.

It belongs to the class-II aminoacyl-tRNA synthetase family. Type-1 seryl-tRNA synthetase subfamily. Homodimer. The tRNA molecule binds across the dimer.

Its subcellular location is the cytoplasm. The catalysed reaction is tRNA(Ser) + L-serine + ATP = L-seryl-tRNA(Ser) + AMP + diphosphate + H(+). It carries out the reaction tRNA(Sec) + L-serine + ATP = L-seryl-tRNA(Sec) + AMP + diphosphate + H(+). It functions in the pathway aminoacyl-tRNA biosynthesis; selenocysteinyl-tRNA(Sec) biosynthesis; L-seryl-tRNA(Sec) from L-serine and tRNA(Sec): step 1/1. Catalyzes the attachment of serine to tRNA(Ser). Is also able to aminoacylate tRNA(Sec) with serine, to form the misacylated tRNA L-seryl-tRNA(Sec), which will be further converted into selenocysteinyl-tRNA(Sec). The sequence is that of Serine--tRNA ligase from Synechococcus elongatus (strain ATCC 33912 / PCC 7942 / FACHB-805) (Anacystis nidulans R2).